The sequence spans 173 residues: C-phycocyanin-3 beta subunit (173 aa).

Asparagine 73 bears the N4-methylasparagine mark. 2 residues coordinate (2R,3E)-phycocyanobilin: cysteine 83 and cysteine 154.

The protein belongs to the phycobiliprotein family. In terms of assembly, heterodimer of an alpha and a beta subunit, which further assembles into trimers and the trimers into hexamers. Contains two covalently linked bilin chromophores.

It localises to the cellular thylakoid membrane. Its function is as follows. Light-harvesting photosynthetic bile pigment-protein from the phycobiliprotein complex (phycobilisome, PBS). Phycocyanin is the major phycobiliprotein in the PBS rod. The protein is C-phycocyanin-3 beta subunit (cpcB3) of Microchaete diplosiphon (Fremyella diplosiphon).